The sequence spans 297 residues: Homoserine kinase (297 aa).

Residue 82–92 participates in ATP binding; the sequence is PLTRGLGSSAS.

Belongs to the GHMP kinase family. Homoserine kinase subfamily.

It is found in the cytoplasm. The catalysed reaction is L-homoserine + ATP = O-phospho-L-homoserine + ADP + H(+). It functions in the pathway amino-acid biosynthesis; L-threonine biosynthesis; L-threonine from L-aspartate: step 4/5. Its function is as follows. Catalyzes the ATP-dependent phosphorylation of L-homoserine to L-homoserine phosphate. This is Homoserine kinase from Bacillus cereus (strain ATCC 10987 / NRS 248).